The chain runs to 141 residues: Large ribosomal subunit protein uL16 (141 aa).

The protein belongs to the universal ribosomal protein uL16 family. Part of the 50S ribosomal subunit.

Binds 23S rRNA and is also seen to make contacts with the A and possibly P site tRNAs. The protein is Large ribosomal subunit protein uL16 of Sulfurimonas denitrificans (strain ATCC 33889 / DSM 1251) (Thiomicrospira denitrificans (strain ATCC 33889 / DSM 1251)).